Here is a 252-residue protein sequence, read N- to C-terminus: Endonuclease NucS (252 aa).

This sequence belongs to the NucS endonuclease family.

The protein resides in the cytoplasm. In terms of biological role, cleaves both 3' and 5' ssDNA extremities of branched DNA structures. In Sulfurisphaera tokodaii (strain DSM 16993 / JCM 10545 / NBRC 100140 / 7) (Sulfolobus tokodaii), this protein is Endonuclease NucS.